The chain runs to 181 residues: Large ribosomal subunit protein uL6 (181 aa).

It belongs to the universal ribosomal protein uL6 family. Part of the 50S ribosomal subunit.

This protein binds to the 23S rRNA, and is important in its secondary structure. It is located near the subunit interface in the base of the L7/L12 stalk, and near the tRNA binding site of the peptidyltransferase center. The polypeptide is Large ribosomal subunit protein uL6 (Hydrogenobaculum sp. (strain Y04AAS1)).